The sequence spans 791 residues: IQ motif and ubiquitin-like domain-containing protein (791 aa).

The interval 1–73 is disordered; the sequence is MSNQQEKYEA…SDQSFSSLEP (73 aa). The 77-residue stretch at 131 to 207 folds into the Ubiquitin-like domain; sequence ATVKVVLIPV…VQVEIFSTNP (77 aa). An IQ domain is found at 338–367; sequence RLKAVIVIQTYYRQWHAKIFVENLRRQKSL.

Component of the axonemal radial spoke 1 (RS1) complex, at least composed of spoke head proteins RSPH1, RSPH3, RSPH9 and the cilia-specific component RSPH4A or sperm-specific component RSPH6A, spoke stalk proteins RSPH14, DNAJB13, DYDC1, ROPN1L and NME5, and the anchor protein IQUB. Does not appear to be part of radial spoke complexes 2 or 3 (RS2 or RS3). Interacts with CALM1. Interacts with DNAJB13. Interacts with DYNLL2. Interacts with NME5. Interacts with RSPH3. Interacts with RSPH9. Interacts with ZMYND10. Interacts with calmodulin; the interaction occurs in conditions of low but not high calcium.

It is found in the cytoplasm. The protein localises to the cytoskeleton. The protein resides in the flagellum axoneme. Its subcellular location is the cell projection. It localises to the cilium. In terms of biological role, adapter protein that anchors the radial spoke 1 (RS1) complex to the A microtubule of outer doublet microtubules in axonemes. The triple radial spokes (RS1, RS2 and RS3) are required to modulate beating of the sperm flagellum. May play a role in inhibiting signaling via MAPK1/ERK2 and MAPK3/ERK1. Additionally, may play a role in the functioning of cilia. Not required for the functioning of tracheal or ependymal cilia. In Homo sapiens (Human), this protein is IQ motif and ubiquitin-like domain-containing protein (IQUB).